The following is a 286-amino-acid chain: Acetyl-coenzyme A carboxylase carboxyl transferase subunit beta (286 aa).

Residues 28–286 (LMQKCSNCKK…KMHMDGRQLK (259 aa)) form the CoA carboxyltransferase N-terminal domain. Positions 32, 35, 51, and 54 each coordinate Zn(2+). Residues 32 to 54 (CSNCKKIYYRKEMVKALQVCPNC) form a C4-type zinc finger.

It belongs to the AccD/PCCB family. Acetyl-CoA carboxylase is a heterohexamer composed of biotin carboxyl carrier protein (AccB), biotin carboxylase (AccC) and two subunits each of ACCase subunit alpha (AccA) and ACCase subunit beta (AccD). Zn(2+) is required as a cofactor.

It is found in the cytoplasm. The enzyme catalyses N(6)-carboxybiotinyl-L-lysyl-[protein] + acetyl-CoA = N(6)-biotinyl-L-lysyl-[protein] + malonyl-CoA. The protein operates within lipid metabolism; malonyl-CoA biosynthesis; malonyl-CoA from acetyl-CoA: step 1/1. Functionally, component of the acetyl coenzyme A carboxylase (ACC) complex. Biotin carboxylase (BC) catalyzes the carboxylation of biotin on its carrier protein (BCCP) and then the CO(2) group is transferred by the transcarboxylase to acetyl-CoA to form malonyl-CoA. The polypeptide is Acetyl-coenzyme A carboxylase carboxyl transferase subunit beta (Oceanobacillus iheyensis (strain DSM 14371 / CIP 107618 / JCM 11309 / KCTC 3954 / HTE831)).